A 372-amino-acid chain; its full sequence is Hydrogenase-1 small chain (372 aa).

A signal peptide (tat-type signal) is located at residues 1–45; sequence MNNEETFYQAMRRQGVTRRSFLKYCSLAATSLGLGAGMAPKIAWA. Residues 46-326 lie on the Periplasmic side of the membrane; the sequence is LENKPRIPVV…QMGTHSTADT (281 aa). [4Fe-4S] cluster-binding residues include C62, C65, C160, C194, H232, C235, C260, and C266. Residues C275, C294, and C297 each contribute to the [3Fe-4S] cluster site. The chain crosses the membrane as a helical span at residues 327–347; that stretch reads VGLTALGVVAAAVGVHAVASA. The disordered stretch occupies residues 347–372; sequence AVDQRRRHNQQPTETEHQPGNEDKQA. At 348–372 the chain is on the cytoplasmic side; that stretch reads VDQRRRHNQQPTETEHQPGNEDKQA. A compositionally biased stretch (basic and acidic residues) spans 360–372; it reads ETEHQPGNEDKQA.

The protein belongs to the [NiFe]/[NiFeSe] hydrogenase small subunit family. As to quaternary structure, heterodimer of a large and a small subunit. [4Fe-4S] cluster is required as a cofactor. It depends on [3Fe-4S] cluster as a cofactor. Predicted to be exported by the Tat system. The position of the signal peptide cleavage has not been experimentally proven.

Its subcellular location is the cell inner membrane. The enzyme catalyses H2 + A = AH2. Functionally, this is one of three E.coli hydrogenases synthesized in response to different physiological conditions. HYD1 is believed to have a role in hydrogen cycling during fermentative growth. The sequence is that of Hydrogenase-1 small chain (hyaA) from Escherichia coli O6:H1 (strain CFT073 / ATCC 700928 / UPEC).